The following is a 240-amino-acid chain: Small ribosomal subunit protein uS2c (240 aa).

It belongs to the universal ribosomal protein uS2 family.

The protein resides in the plastid. It is found in the chloroplast. The chain is Small ribosomal subunit protein uS2c (rps2) from Euglena gracilis.